Here is a 302-residue protein sequence, read N- to C-terminus: Sulfate adenylyltransferase subunit 2 (302 aa).

It belongs to the PAPS reductase family. CysD subfamily. As to quaternary structure, heterodimer composed of CysD, the smaller subunit, and CysN.

The catalysed reaction is sulfate + ATP + H(+) = adenosine 5'-phosphosulfate + diphosphate. The protein operates within sulfur metabolism; hydrogen sulfide biosynthesis; sulfite from sulfate: step 1/3. Its function is as follows. With CysN forms the ATP sulfurylase (ATPS) that catalyzes the adenylation of sulfate producing adenosine 5'-phosphosulfate (APS) and diphosphate, the first enzymatic step in sulfur assimilation pathway. APS synthesis involves the formation of a high-energy phosphoric-sulfuric acid anhydride bond driven by GTP hydrolysis by CysN coupled to ATP hydrolysis by CysD. The chain is Sulfate adenylyltransferase subunit 2 from Shewanella halifaxensis (strain HAW-EB4).